We begin with the raw amino-acid sequence, 434 residues long: Phosphomethylpyrimidine synthase (434 aa).

Substrate is bound by residues asparagine 74, methionine 103, tyrosine 132, histidine 171, 193 to 195, 234 to 237, and glutamate 273; these read SRG and DGIR. Position 277 (histidine 277) interacts with Zn(2+). Tyrosine 300 contacts substrate. Histidine 341 is a Zn(2+) binding site. [4Fe-4S] cluster contacts are provided by cysteine 417, cysteine 420, and cysteine 424.

Belongs to the ThiC family. As to quaternary structure, homodimer. [4Fe-4S] cluster serves as cofactor.

The catalysed reaction is 5-amino-1-(5-phospho-beta-D-ribosyl)imidazole + S-adenosyl-L-methionine = 4-amino-2-methyl-5-(phosphooxymethyl)pyrimidine + CO + 5'-deoxyadenosine + formate + L-methionine + 3 H(+). It participates in cofactor biosynthesis; thiamine diphosphate biosynthesis. In terms of biological role, catalyzes the synthesis of the hydroxymethylpyrimidine phosphate (HMP-P) moiety of thiamine from aminoimidazole ribotide (AIR) in a radical S-adenosyl-L-methionine (SAM)-dependent reaction. The sequence is that of Phosphomethylpyrimidine synthase from Desulfotalea psychrophila (strain LSv54 / DSM 12343).